An 82-amino-acid polypeptide reads, in one-letter code: Translation initiation factor IF-1, chloroplastic (82 aa).

In terms of domain architecture, S1-like spans 1-72 (MNKQNLIDVE…TKGRIIYRLR (72 aa)).

Belongs to the IF-1 family. Component of the 30S ribosomal translation pre-initiation complex which assembles on the 30S ribosome in the order IF-2 and IF-3, IF-1 and N-formylmethionyl-tRNA(fMet); mRNA recruitment can occur at any time during PIC assembly.

It is found in the plastid. The protein localises to the chloroplast. In terms of biological role, one of the essential components for the initiation of protein synthesis. Stabilizes the binding of IF-2 and IF-3 on the 30S subunit to which N-formylmethionyl-tRNA(fMet) subsequently binds. Helps modulate mRNA selection, yielding the 30S pre-initiation complex (PIC). Upon addition of the 50S ribosomal subunit IF-1, IF-2 and IF-3 are released leaving the mature 70S translation initiation complex. In Cycas taitungensis (Prince sago), this protein is Translation initiation factor IF-1, chloroplastic.